A 433-amino-acid polypeptide reads, in one-letter code: MCVCQTMEVGQYGKNASRAGDRGVLLEPFIHQVGGHSSMMRYDDHTVCKPLISREQRFYESLPPEMKEFTPEYKGVVSVCFEGDSDGYINLVAYPYVESETVEQDDTPEREQPRRKHSRRSLHRSGSGSDHKEEKASLSFETSESSQEAKSPKVELHSHSDVPFQMLDSNSGLSSEKISYNPWSLRCHKQQLSRMRSESKDRKLYKFLLLENVVHHFKYPCVLDLKMGTRQHGDDASAEKAARQMRKCEQSTSATLGVRVCGMQVYQLDTGHYLCRNKYYGRGLSIEGFRNALYQYLHNGLDLRRDLFEPILSKLRGLKAVLERQASYRFYSSSLLVIYDGKECRSELRLKHVDMGLPEVPPPCGPSTSPSSTSLEAGPSSPPKVDVRMIDFAHSTFKGFRDDPTVHDGPDRGYVFGLENLISIMEQMRDENQ.

A disordered region spans residues 100-160 (ETVEQDDTPE…SPKVELHSHS (61 aa)). Residues 113-123 (PRRKHSRRSLH) are compositionally biased toward basic residues. Positions 139–149 (SFETSESSQEA) are enriched in polar residues. Residues 150 to 160 (KSPKVELHSHS) show a composition bias toward basic and acidic residues. Residue Ser151 is modified to Phosphoserine. 220–228 (PCVLDLKMG) serves as a coordination point for substrate. The interval 359-383 (EVPPPCGPSTSPSSTSLEAGPSSPP) is disordered.

Belongs to the inositol phosphokinase (IPK) family. Highly expressed in brain and testis. Detected at much lower levels in heart, kidney, liver, lung and spleen.

The protein resides in the cytoplasm. It is found in the nucleus. The catalysed reaction is 1D-myo-inositol hexakisphosphate + ATP = 5-diphospho-1D-myo-inositol 1,2,3,4,6-pentakisphosphate + ADP. The enzyme catalyses 1-diphospho-1D-myo-inositol 2,3,4,5,6-pentakisphosphate + ATP + H(+) = 1,5-bis(diphospho)-1D-myo-inositol 2,3,4,6-tetrakisphosphate + ADP. Its function is as follows. Converts inositol hexakisphosphate (InsP6) to diphosphoinositol pentakisphosphate (InsP7/PP-InsP5). Converts 1,3,4,5,6-pentakisphosphate (InsP5) to PP-InsP4. The polypeptide is Inositol hexakisphosphate kinase 1 (Ip6k1) (Mus musculus (Mouse)).